Reading from the N-terminus, the 90-residue chain is Acylphosphatase (90 aa).

One can recognise an Acylphosphatase-like domain in the interval 3 to 88; the sequence is TWHMTAHGRV…GKFEDFDLRP (86 aa). Residues Arg-18 and Asn-36 contribute to the active site.

Belongs to the acylphosphatase family.

The catalysed reaction is an acyl phosphate + H2O = a carboxylate + phosphate + H(+). This is Acylphosphatase (acyP) from Cupriavidus pinatubonensis (strain JMP 134 / LMG 1197) (Cupriavidus necator (strain JMP 134)).